A 299-amino-acid polypeptide reads, in one-letter code: Leucine zipper transcription factor-like protein 1 (299 aa).

The tract at residues 145–299 is interaction with BSS9; the sequence is GTTELLNKEI…KRLAKYESED (155 aa). A coiled-coil region spans residues 145–299; it reads GTTELLNKEI…KRLAKYESED (155 aa).

This sequence belongs to the LZTFL1 family. In terms of assembly, self-associates. Interacts with BBS9; the interaction mediates the association of LZTL1 with the BBsome complex and regulates BBSome ciliary trafficking.

Its subcellular location is the cytoplasm. Regulates ciliary localization of the BBSome complex. Together with the BBSome complex, controls SMO ciliary trafficking and contributes to the sonic hedgehog (SHH) pathway regulation. May play a role in neurite outgrowth. May have tumor suppressor function. This is Leucine zipper transcription factor-like protein 1 (Lztfl1) from Rattus norvegicus (Rat).